Here is a 284-residue protein sequence, read N- to C-terminus: MLSDCEFDAARDTIRRALHEDLRYGLDITTQATVPAGTVVTGSMVPREPGVIAGVDVALLVLDEVFGVDGYRVLYRVEDGARLQSGQPLLTVQAAARGLLTAERTMLNLVCHMSGIATVTVAWVDAVRGTKAKIRDTRKTLPGLRALQKYAVRVGGGVNHRLGLGDTALIKDNHVAAVGSVVDALRAVRAAAPELPCEVEVDSLEQLDAMLAEEPELILLDNFPVWQTQVAVQRRDIRAPTVLLESSGGLSLENAAIYAGTGVDYLAVGALTHSVRILDIGLDL.

Substrate contacts are provided by residues Arg-104, 137–139, Arg-161, Lys-171, Glu-200, Asp-221, 247–249, and 268–270; these read TRK, SGG, and VGA.

Belongs to the NadC/ModD family. As to quaternary structure, hexamer formed by 3 homodimers.

The catalysed reaction is nicotinate beta-D-ribonucleotide + CO2 + diphosphate = quinolinate + 5-phospho-alpha-D-ribose 1-diphosphate + 2 H(+). Its pathway is cofactor biosynthesis; NAD(+) biosynthesis; nicotinate D-ribonucleotide from quinolinate: step 1/1. Functionally, involved in the catabolism of quinolinic acid (QA). The chain is Nicotinate-nucleotide pyrophosphorylase [carboxylating] (nadC) from Mycobacterium leprae (strain TN).